We begin with the raw amino-acid sequence, 41 residues long: MPLDRNNNPNQQPVELNRTSLYLGLLLVFVVGILFSSYFFN.

The helical transmembrane segment at 20 to 40 (SLYLGLLLVFVVGILFSSYFF) threads the bilayer.

The protein belongs to the PsbL family. PSII is composed of 1 copy each of membrane proteins PsbA, PsbB, PsbC, PsbD, PsbE, PsbF, PsbH, PsbI, PsbJ, PsbK, PsbL, PsbM, PsbT, PsbX, PsbY, PsbZ, Psb30/Ycf12, peripheral proteins PsbO, CyanoQ (PsbQ), PsbU, PsbV and a large number of cofactors. It forms dimeric complexes.

Its subcellular location is the cellular thylakoid membrane. Its function is as follows. One of the components of the core complex of photosystem II (PSII). PSII is a light-driven water:plastoquinone oxidoreductase that uses light energy to abstract electrons from H(2)O, generating O(2) and a proton gradient subsequently used for ATP formation. It consists of a core antenna complex that captures photons, and an electron transfer chain that converts photonic excitation into a charge separation. This subunit is found at the monomer-monomer interface and is required for correct PSII assembly and/or dimerization. In Trichodesmium erythraeum (strain IMS101), this protein is Photosystem II reaction center protein L.